The following is a 245-amino-acid chain: Biosynthetic peptidoglycan transglycosylase (245 aa).

Residues 20–42 traverse the membrane as a helical segment; sequence VYAGSVFAGAWLATQLFYLVQIA.

Belongs to the glycosyltransferase 51 family.

It is found in the cell inner membrane. It catalyses the reaction [GlcNAc-(1-&gt;4)-Mur2Ac(oyl-L-Ala-gamma-D-Glu-L-Lys-D-Ala-D-Ala)](n)-di-trans,octa-cis-undecaprenyl diphosphate + beta-D-GlcNAc-(1-&gt;4)-Mur2Ac(oyl-L-Ala-gamma-D-Glu-L-Lys-D-Ala-D-Ala)-di-trans,octa-cis-undecaprenyl diphosphate = [GlcNAc-(1-&gt;4)-Mur2Ac(oyl-L-Ala-gamma-D-Glu-L-Lys-D-Ala-D-Ala)](n+1)-di-trans,octa-cis-undecaprenyl diphosphate + di-trans,octa-cis-undecaprenyl diphosphate + H(+). The protein operates within cell wall biogenesis; peptidoglycan biosynthesis. In terms of biological role, peptidoglycan polymerase that catalyzes glycan chain elongation from lipid-linked precursors. In Burkholderia ambifaria (strain ATCC BAA-244 / DSM 16087 / CCUG 44356 / LMG 19182 / AMMD) (Burkholderia cepacia (strain AMMD)), this protein is Biosynthetic peptidoglycan transglycosylase.